We begin with the raw amino-acid sequence, 856 residues long: DNA mismatch repair protein MutS (856 aa).

An ATP-binding site is contributed by 605–612; that stretch reads GPNMSGKS.

This sequence belongs to the DNA mismatch repair MutS family.

Its function is as follows. This protein is involved in the repair of mismatches in DNA. It is possible that it carries out the mismatch recognition step. This protein has a weak ATPase activity. The protein is DNA mismatch repair protein MutS of Lysinibacillus sphaericus (strain C3-41).